The primary structure comprises 177 residues: Archaemetzincin (177 aa).

Residue His129 coordinates Zn(2+). Glu130 (proton acceptor) is an active-site residue. The Zn(2+) site is built by His133, His139, Cys140, Cys145, Cys164, and Cys167.

The protein belongs to the peptidase M54 family. In terms of assembly, monomer. Zn(2+) serves as cofactor.

In terms of biological role, probable zinc metalloprotease whose natural substrate is unknown. In Sulfolobus acidocaldarius (strain ATCC 33909 / DSM 639 / JCM 8929 / NBRC 15157 / NCIMB 11770), this protein is Archaemetzincin.